The primary structure comprises 259 residues: Keratin-associated protein 10-8 (259 aa).

The tract at residues 26–243 (HVSRVSSPST…SCQPSCCHPA (218 aa)) is 19 X 5 AA repeats of C-C-X(3). 19 repeat units span residues 50-54 (CCEPR), 60-64 (CCTPS), 65-69 (CCAPA), 98-102 (CCQQS), 108-112 (CCTSS), 118-122 (CCVPV), 123-127 (CCKSN), 133-137 (CCVSI), 145-149 (CCQQS), 155-159 (CCTFS), 165-169 (CCVPI), 170-174 (CCKPI), 175-179 (CCVPV), 187-191 (CCQKS), 197-201 (CCTTS), 202-206 (CCRPS), 221-225 (CCVPV), 228-232 (CCVPA), and 239-243 (CCHPA).

This sequence belongs to the KRTAP type 10 family. In terms of assembly, interacts with hair keratins. In terms of tissue distribution, restricted to a narrow region of the hair fiber cuticle, lying approximately 20 cell layers above the apex of the dermal papilla of the hair root; not detected in any other tissues.

In terms of biological role, in the hair cortex, hair keratin intermediate filaments are embedded in an interfilamentous matrix, consisting of hair keratin-associated proteins (KRTAP), which are essential for the formation of a rigid and resistant hair shaft through their extensive disulfide bond cross-linking with abundant cysteine residues of hair keratins. The matrix proteins include the high-sulfur and high-glycine-tyrosine keratins. This chain is Keratin-associated protein 10-8 (KRTAP10-8), found in Homo sapiens (Human).